The chain runs to 439 residues: Glutamyl-tRNA(Gln) amidotransferase subunit D (439 aa).

Residues 88 to 419 enclose the Asparaginase/glutaminase domain; it reads GKVKIISTGG…EEVKRIMLTN (332 aa). Active-site residues include threonine 98, threonine 174, aspartate 175, and lysine 253.

The protein belongs to the asparaginase 1 family. GatD subfamily. Heterodimer of GatD and GatE.

The catalysed reaction is L-glutamyl-tRNA(Gln) + L-glutamine + ATP + H2O = L-glutaminyl-tRNA(Gln) + L-glutamate + ADP + phosphate + H(+). Allows the formation of correctly charged Gln-tRNA(Gln) through the transamidation of misacylated Glu-tRNA(Gln) in organisms which lack glutaminyl-tRNA synthetase. The reaction takes place in the presence of glutamine and ATP through an activated gamma-phospho-Glu-tRNA(Gln). The GatDE system is specific for glutamate and does not act on aspartate. This is Glutamyl-tRNA(Gln) amidotransferase subunit D from Metallosphaera sedula (strain ATCC 51363 / DSM 5348 / JCM 9185 / NBRC 15509 / TH2).